The sequence spans 420 residues: ATP phosphoribosyltransferase regulatory subunit (420 aa).

This sequence belongs to the class-II aminoacyl-tRNA synthetase family. HisZ subfamily. As to quaternary structure, heteromultimer composed of HisG and HisZ subunits.

The protein resides in the cytoplasm. It functions in the pathway amino-acid biosynthesis; L-histidine biosynthesis; L-histidine from 5-phospho-alpha-D-ribose 1-diphosphate: step 1/9. Functionally, required for the first step of histidine biosynthesis. May allow the feedback regulation of ATP phosphoribosyltransferase activity by histidine. The polypeptide is ATP phosphoribosyltransferase regulatory subunit (Bacillus cereus (strain ATCC 14579 / DSM 31 / CCUG 7414 / JCM 2152 / NBRC 15305 / NCIMB 9373 / NCTC 2599 / NRRL B-3711)).